The chain runs to 771 residues: DNA polymerase 1 (771 aa).

It belongs to the DNA polymerase type-B family.

The enzyme catalyses DNA(n) + a 2'-deoxyribonucleoside 5'-triphosphate = DNA(n+1) + diphosphate. This Pyrococcus abyssi protein is DNA polymerase 1 (polI).